The primary structure comprises 513 residues: Xylose import ATP-binding protein XylG (513 aa).

2 consecutive ABC transporter domains span residues 5-242 (LEMK…VGRE) and 259-505 (LRVE…LRSE). 37 to 44 (GENGSGKS) is an ATP binding site.

It belongs to the ABC transporter superfamily. Xylose importer (TC 3.A.1.2.4) family. In terms of assembly, the complex is composed of two ATP-binding proteins (XylG), two transmembrane proteins (XylH) and a solute-binding protein (XylF).

It is found in the cell inner membrane. It carries out the reaction D-xylose(out) + ATP + H2O = D-xylose(in) + ADP + phosphate + H(+). Part of the ABC transporter complex XylFGH involved in xylose import. Responsible for energy coupling to the transport system. This is Xylose import ATP-binding protein XylG from Pectobacterium atrosepticum (strain SCRI 1043 / ATCC BAA-672) (Erwinia carotovora subsp. atroseptica).